Reading from the N-terminus, the 691-residue chain is Protein phosphatase 1 regulatory subunit 37 (691 aa).

Residues 1-43 (MEIAPQEAPPVPGADGDIEEAPAEAGSPSPASPPADGRLKAAA) are disordered. A phosphoserine mark is found at serine 50 and serine 56. LRR repeat units lie at residues 220-240 (SLAV…MLLA), 248-269 (NLRE…AQLG), 277-297 (SLQI…AYIC), 306-326 (GLVT…AFLG), and 334-354 (SLET…RHLK). The segment at 460-662 (EREEKEQPPQ…PEVKGGSCGL (203 aa)) is disordered. Residues 468–481 (PQLSASMPETTATE) are compositionally biased toward polar residues. The segment covering 505 to 523 (SDSDSDSDGEEEEEEEGER) has biased composition (acidic residues). The residue at position 561 (serine 561) is a Phosphoserine. Pro residues-rich tracts occupy residues 584 to 605 (PASP…PSLP) and 620 to 634 (PQPP…PPLP).

This sequence belongs to the PPP1R37 family. As to quaternary structure, interacts with PPP1CA.

Its function is as follows. Inhibits phosphatase activity of protein phosphatase 1 (PP1) complexes. This chain is Protein phosphatase 1 regulatory subunit 37 (PPP1R37), found in Homo sapiens (Human).